An 84-amino-acid chain; its full sequence is uncharacterized protein (84 aa).

An HTH cro/C1-type domain is found at 7-62; the sequence is IDVMLAKRKMSVTELSERVGITMANLSILKNGKAKAIRLSTLEAICKALECQPGDI. The segment at residues 18–37 is a DNA-binding region (H-T-H motif); that stretch reads VTELSERVGITMANLSILKN.

This is an uncharacterized protein from Bacillus subtilis (strain 168).